We begin with the raw amino-acid sequence, 98 residues long: Alpha-elicitin capsicein (98 aa).

3 cysteine pairs are disulfide-bonded: Cys-3-Cys-71, Cys-27-Cys-56, and Cys-51-Cys-95.

The protein belongs to the elicitin family.

It localises to the secreted. Functionally, induces local and distal defense responses (incompatible hypersensitive reaction) in plants from the solanaceae and cruciferae families. Elicits leaf necrosis and causes the accumulation of pathogenesis-related proteins. Might interact with the lipidic molecules of the plasma membrane. The protein is Alpha-elicitin capsicein of Phytophthora capsici.